The chain runs to 1177 residues: Putative ATP-dependent RNA helicase TDRD12 (1177 aa).

The region spanning 56-118 (TLEEGQVCVV…RVVVESFMQL (63 aa)) is the Tudor 1 domain. Residues 447-635 (WPPIARGCDV…KEFMNDPYIV (189 aa)) enclose the Helicase ATP-binding domain. 460 to 467 (SHCESNPL) contributes to the ATP binding site. The DEAH box signature appears at 574 to 577 (DEVE). Residues 900–999 (IVDKHMDLYA…HTLPPQAVEF (100 aa)) enclose the Tudor 2 domain. Residues 1098–1177 (EESLSQTPPR…VFKRWLSSNR (80 aa)) are disordered. Residues 1100–1115 (SLSQTPPRVTGTSPAQ) are compositionally biased toward polar residues.

As to quaternary structure, component of a mRNP complex containing PIWIL2, TDRD1 and piRNAs. Component of the PET complex, at least composed of EXD1, PIWIL2, TDRD12 and piRNAs.

It carries out the reaction ATP + H2O = ADP + phosphate + H(+). Functionally, probable ATP-binding RNA helicase required during spermatogenesis to repress transposable elements and preventing their mobilization, which is essential for the germline integrity. Acts via the piRNA metabolic process, which mediates the repression of transposable elements during meiosis by forming complexes composed of piRNAs and Piwi proteins and governs the methylation and subsequent repression of transposons. Involved in the secondary piRNAs metabolic process. Acts via the PET complex, a multiprotein complex required during the secondary piRNAs metabolic process for the PIWIL2 slicing-triggered loading of PIWIL4 piRNAs. The polypeptide is Putative ATP-dependent RNA helicase TDRD12 (TDRD12) (Homo sapiens (Human)).